The following is a 121-amino-acid chain: MVHMHITAWALGLILFFVAYSLYSAGRKGKGVHMGLRLMYIFIIVTGFMLYMSIVKTATGSMHMWYGLKMLAGILVIGGMEMVLVKMSKNKPTGAVWGLFIVALVAVIYLGLKLPIGWKVF.

The next 4 helical transmembrane spans lie at 6–26, 38–58, 65–85, and 92–112; these read ITAW…YSAG, LMYI…VKTA, WYGL…MVLV, and PTGA…YLGL.

It belongs to the UPF0344 family.

It localises to the cell membrane. The chain is UPF0344 protein BCE_1257 from Bacillus cereus (strain ATCC 10987 / NRS 248).